The primary structure comprises 375 residues: 23S rRNA (uracil(747)-C(5))-methyltransferase RlmC (375 aa).

Positions 3, 11, 14, and 87 each coordinate [4Fe-4S] cluster. 4 residues coordinate S-adenosyl-L-methionine: Q212, F241, E262, and N307. The Nucleophile role is filled by C334.

It belongs to the class I-like SAM-binding methyltransferase superfamily. RNA M5U methyltransferase family. RlmC subfamily.

The enzyme catalyses uridine(747) in 23S rRNA + S-adenosyl-L-methionine = 5-methyluridine(747) in 23S rRNA + S-adenosyl-L-homocysteine + H(+). Functionally, catalyzes the formation of 5-methyl-uridine at position 747 (m5U747) in 23S rRNA. In Escherichia coli (strain SMS-3-5 / SECEC), this protein is 23S rRNA (uracil(747)-C(5))-methyltransferase RlmC.